The chain runs to 443 residues: MSTTDSIVSSQTKQSSWRKSDTTWTLGLFGTAIGAGVLFFPIRAGFGGLIPILLMLVLAYPIAFYCHRALARLCLSGSNPSGNITETVEEHFGKTGGVVITFLYFFAICPLLWIYGVTITNTFMTFWENQLQMPALNRGVVALFLLLLMAFVIWFGKDLMVKVMSYLVWPFIASLVLISLSLIPYWNSAVIDQVDLSNIALTGHDGILVTVWLGISIMVFSFNFSPIVSSFVVSKREEYEKEFGRDFTERKCSQIISRASMLMVAVVMFFAFSCLFTLSPQNMADAKAQNIPVLSYLANHFASLSGTKSTFATVLEYGASIIALVAIFKSFFGHYLGTLEGLNGLVLKFGYKGDKTKVSMGKLNTISMIFIMGSTWIVAYANPNILDLIEAMGAPIIASLLCLLPMYAIRKAPSLAKYRGRLDNVFVTLIGLLTILNIVYKLF.

The next 11 membrane-spanning stretches (helical) occupy residues 22 to 42, 44 to 64, 97 to 117, 140 to 160, 163 to 183, 207 to 227, 259 to 279, 319 to 339, 366 to 386, 389 to 409, and 423 to 443; these read TTWTLGLFGTAIGAGVLFFPI, AGFGGLIPILLMLVLAYPIAF, GVVITFLYFFAICPLLWIYGV, VVALFLLLLMAFVIWFGKDLM, VMSYLVWPFIASLVLISLSLI, ILVTVWLGISIMVFSFNFSPI, ASMLMVAVVMFFAFSCLFTLS, ASIIALVAIFKSFFGHYLGTL, ISMIFIMGSTWIVAYANPNIL, IEAMGAPIIASLLCLLPMYAI, and DNVFVTLIGLLTILNIVYKLF.

It belongs to the amino acid/polyamine transporter 2 family. SdaC/TdcC subfamily.

The protein localises to the cell inner membrane. The enzyme catalyses L-threonine(in) + H(+)(in) = L-threonine(out) + H(+)(out). It catalyses the reaction L-serine(in) + H(+)(in) = L-serine(out) + H(+)(out). Functionally, involved in the import of threonine and serine into the cell, with the concomitant import of a proton (symport system). This is Threonine/serine transporter TdcC from Salmonella arizonae (strain ATCC BAA-731 / CDC346-86 / RSK2980).